The following is a 48-amino-acid chain: uncharacterized protein (48 aa).

Positions 1 to 48 are disordered; sequence MLFCNNNNNNNNNNNNNNNNNNNNNNNNNNNNNNNNNNNSSNNNNFSR.

This is an uncharacterized protein from Dictyostelium discoideum (Social amoeba).